Reading from the N-terminus, the 315-residue chain is Cytosolic Fe-S cluster assembly factor nubp1-A (315 aa).

Positions 1–23 (MADIPDNAPQHCPGTDSTEAGKS) are disordered. Residues C12, C26, C29, and C35 each contribute to the [4Fe-4S] cluster site. 66 to 73 (GKGGVGKS) contacts ATP. C239 and C242 together coordinate [4Fe-4S] cluster.

Belongs to the Mrp/NBP35 ATP-binding proteins family. NUBP1/NBP35 subfamily. As to quaternary structure, heterotetramer of 2 nubp1 and 2 nubp2 chains. Requires [4Fe-4S] cluster as cofactor.

It is found in the cytoplasm. Functionally, component of the cytosolic iron-sulfur (Fe/S) protein assembly (CIA) machinery. Required for maturation of extramitochondrial Fe-S proteins. The nubp1-nubp2 heterotetramer forms a Fe-S scaffold complex, mediating the de novo assembly of an Fe-S cluster and its transfer to target apoproteins. In Xenopus laevis (African clawed frog), this protein is Cytosolic Fe-S cluster assembly factor nubp1-A (nubp1-A).